The chain runs to 499 residues: Probable cytosol aminopeptidase (499 aa).

Mn(2+)-binding residues include Lys-269 and Asp-274. The active site involves Lys-281. Asp-292, Asp-351, and Glu-353 together coordinate Mn(2+). The active site involves Arg-355.

The protein belongs to the peptidase M17 family. It depends on Mn(2+) as a cofactor.

It is found in the cytoplasm. The catalysed reaction is Release of an N-terminal amino acid, Xaa-|-Yaa-, in which Xaa is preferably Leu, but may be other amino acids including Pro although not Arg or Lys, and Yaa may be Pro. Amino acid amides and methyl esters are also readily hydrolyzed, but rates on arylamides are exceedingly low.. The enzyme catalyses Release of an N-terminal amino acid, preferentially leucine, but not glutamic or aspartic acids.. In terms of biological role, presumably involved in the processing and regular turnover of intracellular proteins. Catalyzes the removal of unsubstituted N-terminal amino acids from various peptides. This Actinobacillus pleuropneumoniae serotype 3 (strain JL03) protein is Probable cytosol aminopeptidase.